The sequence spans 711 residues: MPADVNLSQKPQVLGPEKQDGSCEASVSFEDVTVDFSREEWQQLDPAQRCLYRDVMLELYSHLFAVGYHIPNPEVIFRMLKEKEPRVEEAEVSHQRCQEREFGLEIPQKEISKKASFQKDMVGEFTRDGSWCSILEELRLDADRTKKDEQNQIQPMSHSAFFNKKTLNTESNCEYKDPGKMIRTRPHLASSQKQPQKCCLFTESLKLNLEVNGQNESNDTEQLDDVVGSGQLFSHSSSDACSKNIHTGETFCKGNQCRKVCGHKQSLKQHQIHTQKKPDGCSECGGSFTQKSHLFAQQRIHSVGNLHECGKCGKAFMPQLKLSVYLTDHTGDIPCICKECGKVFIQRSELLTHQKTHTRKKPYKCHDCGKAFFQMLSLFRHQRTHSREKLYECSECGKGFSQNSTLIIHQKIHTGERQYACSECGKAFTQKSTLSLHQRIHSGQKSYVCIECGQAFIQKAHLIVHQRSHTGEKPYQCHNCGKSFISKSQLDIHHRIHTGEKPYECSDCGKTFTQKSHLNIHQKIHTGERHHVCSECGKAFNQKSILSMHQRIHTGEKPYKCSECGKAFTSKSQFKEHQRIHTGEKPYVCTECGKAFNGRSNFHKHQITHTRERPFVCYKCGKAFVQKSELITHQRTHMGEKPYECLDCGKSFSKKPQLKVHQRIHTGERPYVCSECGKAFNNRSNFNKHQTTHTRDKSYKCSYSVKGFTKQ.

Over residues 1–11 (MPADVNLSQKP) the composition is skewed to polar residues. The interval 1 to 21 (MPADVNLSQKPQVLGPEKQDG) is disordered. In terms of domain architecture, KRAB spans 27–98 (VSFEDVTVDF…EAEVSHQRCQ (72 aa)). Residues 279-301 (DGCSECGGSFTQKSHLFAQQRIH) form a C2H2-type 1; atypical zinc finger. A C2H2-type 2; atypical zinc finger spans residues 307 to 329 (HECGKCGKAFMPQLKLSVYLTDH). The C2H2-type 3 zinc-finger motif lies at 335 to 357 (CICKECGKVFIQRSELLTHQKTH). The short motif at 359–362 (RKKP) is the Nuclear localization signal element. C2H2-type zinc fingers lie at residues 363–385 (YKCHDCGKAFFQMLSLFRHQRTH), 391–413 (YECSECGKGFSQNSTLIIHQKIH), 419–441 (YACSECGKAFTQKSTLSLHQRIH), 447–469 (YVCIECGQAFIQKAHLIVHQRSH), 475–497 (YQCHNCGKSFISKSQLDIHHRIH), 503–525 (YECSDCGKTFTQKSHLNIHQKIH), 531–553 (HVCSECGKAFNQKSILSMHQRIH), 559–581 (YKCSECGKAFTSKSQFKEHQRIH), 587–609 (YVCTECGKAFNGRSNFHKHQITH), 615–637 (FVCYKCGKAFVQKSELITHQRTH), 643–665 (YECLDCGKSFSKKPQLKVHQRIH), and 671–693 (YVCSECGKAFNNRSNFNKHQTTH).

It belongs to the krueppel C2H2-type zinc-finger protein family. As to expression, ubiquitous.

The protein resides in the cytoplasm. It localises to the nucleus. Down-regulates the expression of several chemokine receptors. Interferes with HIV-1 replication by suppressing Tat-induced viral LTR promoter activity. In Homo sapiens (Human), this protein is Zinc finger protein 175 (ZNF175).